The sequence spans 204 residues: Nascent polypeptide-associated complex subunit alpha-like protein 3 (204 aa).

Positions 1-23 (MTAEQKVELAAKLEEQKIDLDKP) are enriched in basic and acidic residues. 2 disordered regions span residues 1-68 (MTAE…AMLK) and 141-165 (GETS…EEGV). The segment covering 24–43 (EVEDDDDNDEDDSEDDDEAE) has biased composition (acidic residues). S36 is subject to Phosphoserine. Basic and acidic residues predominate over residues 44 to 59 (GHDGEAGGRSKQSRSE). An NAC-A/B domain is found at 56-121 (SRSEKKSRKA…AKIEDLSSQL (66 aa)). Low complexity predominate over residues 141–152 (GETSSAATAAAV). Residues 153–164 (QDDDDEEVDEEG) show a composition bias toward acidic residues. Residues 159-204 (EVDEEGVEPKDIELVMTQAGVSKPRAVKALKLANGDIVSAIMELTT) form the UBA domain.

Belongs to the NAC-alpha family.

In terms of biological role, may promote appropriate targeting of ribosome-nascent polypeptide complexes. The protein is Nascent polypeptide-associated complex subunit alpha-like protein 3 of Arabidopsis thaliana (Mouse-ear cress).